Here is a 579-residue protein sequence, read N- to C-terminus: DELLA protein RGA2 (579 aa).

The tract at residues 1-31 is disordered; the sequence is MKRDLHQFQGPPDTRFPNHGTANTGSSSKDK. Positions 45–49 match the DELLA motif motif; sequence DELLA. Low complexity-rich tracts occupy residues 149–162 and 174–183; these read SSSSSNQAGDNSQS and SLVTGTTVTT. The disordered stretch occupies residues 149-183; the sequence is SSSSSNQAGDNSQSTKRLKSCSSPDSLVTGTTVTT. The region spanning 205–574 is the GRAS domain; sequence VDSQENGVRL…RPLITTSAWK (370 aa). A leucine repeat I (LRI) region spans residues 212–266; it reads VRLVHALMACAEAIQNNDLSIAEALVKQIGFLAVSQAGAMRKVATYFAEALARRI. The segment at 285 to 350 is VHIID; sequence QMHFYETCPY…GGPPVFRLTG (66 aa). The VHIID signature appears at 316 to 320; that stretch reads VHVID. The tract at residues 364–396 is leucine repeat II (LRII); sequence EVGCKLAQLAEAIHVEFEYRGFVANSLADLDAS. Residues 408–495 are PFYRE; sequence VAVNSVFELH…EVYLGKQICN (88 aa). The short motif at 416–420 is the LXXLL motif element; that stretch reads LHKLL. The interval 498-574 is SAW; that stretch reads ACEGPDRVER…RPLITTSAWK (77 aa).

Belongs to the GRAS family. DELLA subfamily. Post-translationally, phosphorylated. In terms of processing, ubiquitinated. Upon GA application it is ubiquitinated, leading to its subsequent degradation.

It localises to the nucleus. Its function is as follows. Probable transcriptional regulator that acts as a repressor of the gibberellin (GA) signaling pathway. Probably acts by participating in large multiprotein complexes that represses transcription of GA-inducible genes. Upon GA application, it is degraded by the proteasome, allowing the GA signaling pathway. The protein is DELLA protein RGA2 (RGA2) of Brassica campestris (Field mustard).